The primary structure comprises 407 residues: Probable tRNA sulfurtransferase (407 aa).

Positions 61–165 (NEIIQRLSKV…MDAIYIYEKV (105 aa)) constitute a THUMP domain. ATP-binding positions include 183-184 (ML), 208-209 (HF), R265, G287, and Q296.

This sequence belongs to the ThiI family.

Its subcellular location is the cytoplasm. The enzyme catalyses [ThiI sulfur-carrier protein]-S-sulfanyl-L-cysteine + a uridine in tRNA + 2 reduced [2Fe-2S]-[ferredoxin] + ATP + H(+) = [ThiI sulfur-carrier protein]-L-cysteine + a 4-thiouridine in tRNA + 2 oxidized [2Fe-2S]-[ferredoxin] + AMP + diphosphate. It catalyses the reaction [ThiS sulfur-carrier protein]-C-terminal Gly-Gly-AMP + S-sulfanyl-L-cysteinyl-[cysteine desulfurase] + AH2 = [ThiS sulfur-carrier protein]-C-terminal-Gly-aminoethanethioate + L-cysteinyl-[cysteine desulfurase] + A + AMP + 2 H(+). Its pathway is cofactor biosynthesis; thiamine diphosphate biosynthesis. In terms of biological role, catalyzes the ATP-dependent transfer of a sulfur to tRNA to produce 4-thiouridine in position 8 of tRNAs, which functions as a near-UV photosensor. Also catalyzes the transfer of sulfur to the sulfur carrier protein ThiS, forming ThiS-thiocarboxylate. This is a step in the synthesis of thiazole, in the thiamine biosynthesis pathway. The sulfur is donated as persulfide by IscS. This is Probable tRNA sulfurtransferase from Staphylococcus epidermidis (strain ATCC 35984 / DSM 28319 / BCRC 17069 / CCUG 31568 / BM 3577 / RP62A).